A 208-amino-acid chain; its full sequence is Ribosomal RNA large subunit methyltransferase E (208 aa).

S-adenosyl-L-methionine-binding residues include glycine 63, tryptophan 65, aspartate 83, aspartate 99, and aspartate 124. Lysine 164 functions as the Proton acceptor in the catalytic mechanism.

It belongs to the class I-like SAM-binding methyltransferase superfamily. RNA methyltransferase RlmE family.

The protein resides in the cytoplasm. It catalyses the reaction uridine(2552) in 23S rRNA + S-adenosyl-L-methionine = 2'-O-methyluridine(2552) in 23S rRNA + S-adenosyl-L-homocysteine + H(+). Specifically methylates the uridine in position 2552 of 23S rRNA at the 2'-O position of the ribose in the fully assembled 50S ribosomal subunit. In Salmonella arizonae (strain ATCC BAA-731 / CDC346-86 / RSK2980), this protein is Ribosomal RNA large subunit methyltransferase E.